Consider the following 206-residue polypeptide: Ribosomal RNA small subunit methyltransferase G (206 aa).

S-adenosyl-L-methionine is bound by residues G71, F76, 122 to 123 (AE), and R135.

This sequence belongs to the methyltransferase superfamily. RNA methyltransferase RsmG family.

It is found in the cytoplasm. Specifically methylates the N7 position of a guanine in 16S rRNA. The chain is Ribosomal RNA small subunit methyltransferase G from Bacteroides thetaiotaomicron (strain ATCC 29148 / DSM 2079 / JCM 5827 / CCUG 10774 / NCTC 10582 / VPI-5482 / E50).